A 1342-amino-acid chain; its full sequence is MVYSYTEKKRIRKDFGKRPQVLDIPYLLSIQLDSFKKFIKIDPEGLHGLEAAFRSVFPICGYNGNSELQYVSYRLGDAIFDVKECQIRGATYSAPLRVRLRLVIYERDVLEPTVKDIKEQEVYMGEIPLMTNNGTFIINGTERVVVSQLHRSPGVFFDSDKGKTHSSGKVLYNARIIPYRGSWLDFEFDPKDNLFVRIDRRRKLPVTIILRALNYNTEEILNLFFEKNIFNINNNKIQLELVSERLRGETASFDIKKNGKIYVKKGRRITAKHIQELKKDKINSITVPVEYILGRIVSKNYLDPKTGETIILANTELSLEILTKLKNSSFFSIETLFTNDLDHGPYISETLRIDSSHDRISALMEIYRVMRPGEPLTKEATENLFENLFFSEDRYDLSSVGRMKFNRSLLRKKIEGVSTLNKEDIIDVIKKLIDIRNGKGEVDDIDHLGNRRIRSVGEMAENQFRIGLVRVERAVKERLSVGDLDTLMPQDMINAKPISAAIKEFFGSSQLSQFMDQNNPLSEITHKRRISALGLGGLTRERAGFEVRDVHPTHYGRVCPIETPEGPNIGLINSLSVYARTNSYGFLETPYRKVHNRLVTDEIHYLSAIEEGNYVIAQANTNIDKNNYFIDDLVTCRHKGESSLFNCNQVDYMDVSTQQIVSVGASLIPFLEHDDANRALMGANMQRQAVPTLKTDKPLVGTGMERAVAVDSGVTVVAKRGGIIQYIDASRIIIKVNEEETYTGEAGIDIYNLTKYTRSNQNTCINQKPCVKLREKINKNDVLADGPSTDLGELALGQNMRVAFMPWNGYNFEDSILVSEKVVQEDRFTTIHIQELSCISRDTKLGPEEISSDIPNVGEAALSKLDESGIVYIGAEVTGGDILVGKVTPKGETQLTPEEKLLRAIFGEKASDVKDSSLRVPNGVSGTVIDVQIFTRDGVKKDKRALEIENMQLKKAKKDLTEEFKIFELSLFSRIKKTLVSFNIKEDFLNKLPYEKWFKIDIQDRNKKKEIEKLLQQHNQLKKEFEKKIEVKRRKITQGDDLAPGVLKIVKVYLAVKRQIQPGDKMAGRHGNKGVISKINPVEDMPYDENGIPVDIVLNPLGVPSRMNIGQILETHLGMAAKGIGNKINNMLKKQEKISNLKKFIQKAFDLGENLRQKVNLDDFSNEEILDLAKNLKKGMPISTPVFDGAQENEIKQMLKFSNLPTSGQISLFDGRTGEKFERPVTVGYMYMLKLNHLVDDKMHARSTGSYSLVTQQPLGGKAQFGGQRFGEMEVWALEAYGASYTLQEMLTVKSDDVNGRTKMYKNIVDGNHQMEPGMPESFNVLLKEIRSLGINIELENE.

Belongs to the RNA polymerase beta chain family. As to quaternary structure, the RNAP catalytic core consists of 2 alpha, 1 beta, 1 beta' and 1 omega subunit. When a sigma factor is associated with the core the holoenzyme is formed, which can initiate transcription.

The catalysed reaction is RNA(n) + a ribonucleoside 5'-triphosphate = RNA(n+1) + diphosphate. In terms of biological role, DNA-dependent RNA polymerase catalyzes the transcription of DNA into RNA using the four ribonucleoside triphosphates as substrates. The protein is DNA-directed RNA polymerase subunit beta of Buchnera aphidicola subsp. Schizaphis graminum (strain Sg).